The chain runs to 1379 residues: Increased rDNA silencing protein 4 homolog (1379 aa).

Disordered regions lie at residues 1–25 (MDAIHPVSLRNSKRHPLLHSERNLS), 138–159 (TSTRKRSLTVPTPRTSFPHHPR), 240–314 (EFDF…PLPS), 337–370 (SQPFKSAEPLSSAIPLPNPMSEKMRNGASKQAIM), 534–573 (ASKRAALSQQTESASKSSSNISEMCDSHPPSNFSISASQQ), 768–816 (TDLH…NDIG), 1047–1110 (DAPS…KDSQ), and 1168–1208 (AVHE…DGKY). The span at 250-259 (PSDKNLEKLK) shows a compositional bias: basic and acidic residues. Residues 262-287 (ASKQASESQSLKNMESLSLARSSPIL) show a composition bias toward polar residues. A compositionally biased stretch (low complexity) spans 541–555 (SQQTESASKSSSNIS). Residues 562–573 (PPSNFSISASQQ) show a composition bias toward polar residues. Residues 770–780 (LHRKPRRKHKS) show a composition bias toward basic residues. Over residues 793-802 (DESPQSDEVE) the composition is skewed to acidic residues. One can recognise an EH domain in the interval 1240 to 1329 (AANKGYLLSK…DSVWLSSKRM (90 aa)). The region spanning 1273–1308 (APTSVLAKIYDLVDRHHTGVLGRDEFIVGMFLIDQY) is the EF-hand domain.

The protein belongs to the IRS4 family.

Its function is as follows. Positive regulator of phosphatidylinositol 4,5-bisphosphate turnover and negatively regulates signaling through the cell integrity pathway. Involved in rDNA silencing. The polypeptide is Increased rDNA silencing protein 4 homolog (Schizosaccharomyces pombe (strain 972 / ATCC 24843) (Fission yeast)).